A 252-amino-acid polypeptide reads, in one-letter code: Oncostatin-M (252 aa).

Residues 1 to 25 form the signal peptide; it reads MGVLLTQRTLLSLVLALLFPSMASM. Disulfide bonds link cysteine 31–cysteine 152 and cysteine 74–cysteine 192. Residue asparagine 100 is glycosylated (N-linked (GlcNAc...) asparagine). Disordered regions lie at residues 162–184 and 213–252; these read TAEP…ASDA and GESP…QLPR. Asparagine 217 carries N-linked (GlcNAc...) asparagine glycosylation. A compositionally biased stretch (basic residues) spans 218-245; sequence RSRRHSPHQALRKGVRRTRPSRKGKRLM. The propeptide occupies 222-252; that stretch reads HSPHQALRKGVRRTRPSRKGKRLMTRGQLPR.

This sequence belongs to the LIF/OSM family. Post-translationally, propeptide processing is not important for receptor binding activity but may be important growth-inhibitory activity.

The protein resides in the secreted. In terms of biological role, growth regulator. Inhibits the proliferation of a number of tumor cell lines. Stimulates proliferation of AIDS-KS cells. It regulates cytokine production, including IL-6, G-CSF and GM-CSF from endothelial cells. Uses both type I OSM receptor (heterodimers composed of LIFR and IL6ST) and type II OSM receptor (heterodimers composed of OSMR and IL6ST). Involved in the maturation of fetal hepatocytes, thereby promoting liver development and regeneration. The polypeptide is Oncostatin-M (OSM) (Homo sapiens (Human)).